The sequence spans 405 residues: Dynactin subunit 2 (405 aa).

The disordered stretch occupies residues 1–24 (MADPKYADLPGIARNEPDVYETSD). Positions 101-134 (PQQKYQRLLHEIQELTQEVEKAQSTVKESAAEEK) form a coiled coil. The segment at 186–207 (AKTRKNPEGKSPAKGPGPDNEN) is disordered. A coiled-coil region spans residues 383–403 (KENLATVEDNFTSIDARIKKL).

The protein belongs to the dynactin subunit 2 family. In terms of assembly, subunit of dynactin, a multiprotein complex part of a tripartite complex with dynein and a adapter, such as BICDL1, BICD2 or HOOK3. The dynactin complex is built around ACTR1A/ACTB filament and consists of an actin-related filament composed of a shoulder domain, a pointed end and a barbed end. Its length is defined by its flexible shoulder domain. The soulder is composed of 2 DCTN1 subunits, 4 DCTN2 and 2 DCTN3.

Its subcellular location is the cytoplasm. The protein resides in the cytoskeleton. It is found in the microtubule organizing center. It localises to the centrosome. The protein localises to the membrane. Its function is as follows. Part of the dynactin complex that activates the molecular motor dynein for ultra-processive transport along microtubules. In the dynactin soulder domain, binds the ACTR1A filament and acts as a molecular ruler to determine the length. Modulates cytoplasmic dynein binding to an organelle, and plays a role in prometaphase chromosome alignment and spindle organization during mitosis. Involved in anchoring microtubules to centrosomes. The polypeptide is Dynactin subunit 2 (dctn2) (Xenopus tropicalis (Western clawed frog)).